The following is a 140-amino-acid chain: L-fucose mutarotase (140 aa).

Histidine 22 (proton donor) is an active-site residue. Substrate is bound by residues aspartate 30, arginine 107, and tyrosine 129–asparagine 131.

This sequence belongs to the RbsD / FucU family. FucU mutarotase subfamily. Homodecamer.

The protein localises to the cytoplasm. It carries out the reaction alpha-L-fucose = beta-L-fucose. The protein operates within carbohydrate metabolism; L-fucose metabolism. Involved in the anomeric conversion of L-fucose. This Klebsiella pneumoniae (strain 342) protein is L-fucose mutarotase.